We begin with the raw amino-acid sequence, 683 residues long: DNA ligase (683 aa).

Residues 44 to 48, 93 to 94, and E127 contribute to the NAD(+) site; these read DAEYD and SL. Catalysis depends on K129, which acts as the N6-AMP-lysine intermediate. Residues R150, E187, K302, and K326 each coordinate NAD(+). Zn(2+) contacts are provided by C420, C423, C438, and C444. The region spanning 601-683 is the BRCT domain; it reads RVGGRLAGLT…SKLLATGGNQ (83 aa).

It belongs to the NAD-dependent DNA ligase family. LigA subfamily. Requires Mg(2+) as cofactor. Mn(2+) is required as a cofactor.

It carries out the reaction NAD(+) + (deoxyribonucleotide)n-3'-hydroxyl + 5'-phospho-(deoxyribonucleotide)m = (deoxyribonucleotide)n+m + AMP + beta-nicotinamide D-nucleotide.. In terms of biological role, DNA ligase that catalyzes the formation of phosphodiester linkages between 5'-phosphoryl and 3'-hydroxyl groups in double-stranded DNA using NAD as a coenzyme and as the energy source for the reaction. It is essential for DNA replication and repair of damaged DNA. The sequence is that of DNA ligase from Trichlorobacter lovleyi (strain ATCC BAA-1151 / DSM 17278 / SZ) (Geobacter lovleyi).